Here is a 108-residue protein sequence, read N- to C-terminus: Putative septation protein SpoVG (108 aa).

Positions 84–108 (FEKQSSVETEPVTEENMETAENENE) are disordered. Residues 94 to 108 (PVTEENMETAENENE) are compositionally biased toward acidic residues.

It belongs to the SpoVG family.

In terms of biological role, could be involved in septation. This is Putative septation protein SpoVG from Finegoldia magna (strain ATCC 29328 / DSM 20472 / WAL 2508) (Peptostreptococcus magnus).